A 189-amino-acid polypeptide reads, in one-letter code: Large ribosomal subunit protein eL18 (189 aa).

It belongs to the eukaryotic ribosomal protein eL18 family.

It is found in the cytoplasm. The chain is Large ribosomal subunit protein eL18 (RpL18) from Anopheles gambiae (African malaria mosquito).